Consider the following 485-residue polypeptide: Inosine-5'-monophosphate dehydrogenase (485 aa).

2 CBS domains span residues 99–154 and 156–212; these read IVED…TVKE and MTRE…KNAV. NAD(+)-binding positions include Asp247 and 294 to 296; that span reads GIG. Positions 296 and 298 each coordinate K(+). Ser299 lines the IMP pocket. Position 301 (Cys301) interacts with K(+). Cys301 acts as the Thioimidate intermediate in catalysis. IMP is bound by residues 334–336, 357–358, and 381–385; these read DGG, GN, and YRGMG. Arg397 acts as the Proton acceptor in catalysis. Glu412 serves as a coordination point for IMP. Residues Glu466, Ser467, and His468 each contribute to the K(+) site.

This sequence belongs to the IMPDH/GMPR family. Homotetramer. It depends on K(+) as a cofactor.

It catalyses the reaction IMP + NAD(+) + H2O = XMP + NADH + H(+). It participates in purine metabolism; XMP biosynthesis via de novo pathway; XMP from IMP: step 1/1. Its activity is regulated as follows. Mycophenolic acid (MPA) is a non-competitive inhibitor that prevents formation of the closed enzyme conformation by binding to the same site as the amobile flap. In contrast, mizoribine monophosphate (MZP) is a competitive inhibitor that induces the closed conformation. MPA is a potent inhibitor of mammalian IMPDHs but a poor inhibitor of the bacterial enzymes. MZP is a more potent inhibitor of bacterial IMPDH. Its function is as follows. Catalyzes the conversion of inosine 5'-phosphate (IMP) to xanthosine 5'-phosphate (XMP), the first committed and rate-limiting step in the de novo synthesis of guanine nucleotides, and therefore plays an important role in the regulation of cell growth. The polypeptide is Inosine-5'-monophosphate dehydrogenase (Pyrococcus furiosus (strain ATCC 43587 / DSM 3638 / JCM 8422 / Vc1)).